A 300-amino-acid chain; its full sequence is Erythroblast NAD(P)(+)--arginine ADP-ribosyltransferase (300 aa).

An N-terminal signal peptide occupies residues 1 to 22 (MEEPLLHAILGLVLLLSTRTDA). 2 disulfide bridges follow: C51–C260 and C159–C208. One can recognise a TR mART core domain in the interval 70–256 (ETFAEGWRSA…IQLRSQGKSS (187 aa)). NAD(+) is bound by residues Y107, R164, and Q183. R164 is a catalytic residue. S186 is an active-site residue. Position 217 (S217) interacts with NAD(+). E224 is an active-site residue. Residues 276-300 (SADKSSPLPRSPWPGWAPLAAPHSH) form a disordered region.

The protein belongs to the Arg-specific ADP-ribosyltransferase family.

It catalyses the reaction L-arginyl-[protein] + NAD(+) = N(omega)-(ADP-D-ribosyl)-L-arginyl-[protein] + nicotinamide + H(+). The sequence is that of Erythroblast NAD(P)(+)--arginine ADP-ribosyltransferase (MADPRT) from Gallus gallus (Chicken).